Here is a 343-residue protein sequence, read N- to C-terminus: MLFAMQLACASVLPMVLKSAIELDLLEIIRGQDTCMSPTEIASHLPTTNPDAPAMVDRILRLLSCYSVVTCSVRSVDDQRVYGLAPVCKYLTKNQDGVSIAALCLMNQDKVLMESWYHLKDAVLDGGIPFNKAYGMSSFEYHGTDPRFNKVFNRGMSDHSTITMKKVFQTYQGFQGLTSLVDVGGGTGATLTMILSKYPTIRCINFDLPHVIEDAPEYPGIEHVGGDMFVSVPKGDAIFMKWICHDWSDEHCLKLLKNCYDALPNNGKVILAECILPEVPDSSLATKGVVHIDVITVAHNPGGKERTEKEFEALAKAAGFQGFQVFCNAFNTYIIEFSKKICN.

N107 contributes to the (E)-ferulate binding site. 6 residues coordinate S-adenosyl-L-homocysteine: G184, D207, D227, M228, M240, and K241. H245 acts as the Proton acceptor in catalysis. D246 serves as a coordination point for (E)-5-hydroxyferulate. Active-site residues include E273 and E305.

The protein belongs to the class I-like SAM-binding methyltransferase superfamily. Cation-independent O-methyltransferase family. COMT subfamily. As to quaternary structure, homodimer.

It catalyses the reaction (E)-5-hydroxyferulate + S-adenosyl-L-methionine = (E)-sinapate + S-adenosyl-L-homocysteine + H(+). It carries out the reaction luteolin + S-adenosyl-L-methionine = chrysoeriol + S-adenosyl-L-homocysteine + H(+). The enzyme catalyses quercetin + S-adenosyl-L-methionine = isorhamnetin + S-adenosyl-L-homocysteine + H(+). The catalysed reaction is (E)-caffeate + S-adenosyl-L-methionine = (E)-ferulate + S-adenosyl-L-homocysteine + H(+). It catalyses the reaction a 3'-hydroxyflavone + S-adenosyl-L-methionine = a 3'-methoxyflavone + S-adenosyl-L-homocysteine + H(+). Its pathway is flavonoid metabolism. Its function is as follows. Catalyzes the 3'-O-methylation of the flavonoids luteolin and quercetin. Catalyzes the 3- of 5-O-methylation of the phenylpropanoids caffeate and 5-hydroxyferulate. Substrate preference is 5-hydroxyferulate &gt; luteolin &gt; quercetin &gt; caffeate. Apigenin, kempferol and 3,4-dimethylquercetin do not seem to be substrates for methylation. The protein is Flavone 3'-O-methyltransferase OMT2 of Chrysosplenium americanum (American golden saxifrage).